The chain runs to 123 residues: Small ribosomal subunit protein eS8 (123 aa).

Positions 1–37 (MKDQGRSTRKRTGGRLKHASNKKRHQLGREPAETTVG) are disordered. A compositionally biased stretch (basic residues) spans 7–26 (STRKRTGGRLKHASNKKRHQ).

It belongs to the eukaryotic ribosomal protein eS8 family. In terms of assembly, part of the 30S ribosomal subunit.

This chain is Small ribosomal subunit protein eS8, found in Halorubrum lacusprofundi (strain ATCC 49239 / DSM 5036 / JCM 8891 / ACAM 34).